A 616-amino-acid chain; its full sequence is MDKQAERGQSAGPVKTPQGTQPPAHNYTYHTNAAQRAVYDYLKNVKPIPELAEPKTYKTYEEASVEAVLYPIIEKHQVIMVAGAFFGDEGKGKTVNAVANHPGCTFIARVNSGENAGHTVYDDAGRKFVFNLAPSGLLSKGKRNYVGPECVMDPISFMENEVKQLIEANVPYKEQLFIGNVSIVTPYHKLLDLLASAPNSSTLKGMAPIHASKVTKRGIRLDHIFNDQSVLRSRLRKDIDTYFGFLKVKGLSDADVLRRCEKENGDGVVRVPPYVVEFVQAEDKVEYLVKLYMDRVRNNKNFPARCDVAHELRSALSRGEKVMLEGPQSYWLSNAREKFWESTTSADTTASGLLATAQYNFQLYSSVVINVHKAPGSSRVGVGANPSSFVAQDYFSATGVKTLRDLPENMCVDFDSIQKLFFTKAFHPETKEYNGIWEPLEFEDSTGKYNIGVAMAVASSRQHGECGAVTKKPRVCGFFDCVLQYEVNAVQGPYLSISALDRGDDYDKLGVTIAYVYYNGKNDEVLNINGREYKNGDIIKAGEAVPGEVALYYCHPIVKLINGWKQTPIAASKRKPGDPLPRGVCEFLSTVEYFTKAKIISIGNGPRGKDIIYIKQ.

The segment at 1–27 (MDKQAERGQSAGPVKTPQGTQPPAHNY) is disordered. A compositionally biased stretch (polar residues) spans 17-27 (PQGTQPPAHNY). Residues 87–93 (GDEGKGK) and 117–119 (GHT) each bind GTP. Catalysis depends on Asp-88, which acts as the Proton acceptor. Residues Asp-88 and Gly-117 each contribute to the Mg(2+) site. IMP contacts are provided by residues 88 to 91 (DEGK), 115 to 118 (NAGH), Thr-202, Lys-216, Gln-328, Thr-343, and Lys-472. His-118 serves as the catalytic Proton donor. A substrate-binding site is contributed by 468-474 (AVTKKPR). Residues Arg-474 and 603-605 (GNG) each bind GTP.

It belongs to the adenylosuccinate synthetase family. In terms of assembly, homodimer. The cofactor is Mg(2+).

It is found in the cytoplasm. The catalysed reaction is IMP + L-aspartate + GTP = N(6)-(1,2-dicarboxyethyl)-AMP + GDP + phosphate + 2 H(+). Its pathway is purine metabolism; AMP biosynthesis via de novo pathway; AMP from IMP: step 1/2. Functionally, plays an important role in the salvage pathway for purine nucleotide biosynthesis. Catalyzes the first committed step in the biosynthesis of AMP from IMP. This Trypanosoma cruzi (strain CL Brener) protein is Adenylosuccinate synthetase 1.